The following is a 458-amino-acid chain: Argininosuccinate lyase (458 aa).

This sequence belongs to the lyase 1 family. Argininosuccinate lyase subfamily.

Its subcellular location is the cytoplasm. The catalysed reaction is 2-(N(omega)-L-arginino)succinate = fumarate + L-arginine. Its pathway is amino-acid biosynthesis; L-arginine biosynthesis; L-arginine from L-ornithine and carbamoyl phosphate: step 3/3. The protein is Argininosuccinate lyase of Geobacter sp. (strain M21).